We begin with the raw amino-acid sequence, 1134 residues long: Envelopment polyprotein (1134 aa).

An N-terminal signal peptide occupies residues 1–18 (MGIWKWLVMASLVWPVLT). At 19 to 487 (LRNVYDMKIE…GFHGWATAAL (469 aa)) the chain is on the lumenal side. 8 cysteine pairs are disulfide-bonded: cysteine 29-cysteine 151, cysteine 63-cysteine 157, cysteine 109-cysteine 128, cysteine 133-cysteine 138, cysteine 175-cysteine 185, cysteine 210-cysteine 247, cysteine 234-cysteine 351, and cysteine 380-cysteine 389. An N-linked (GlcNAc...) asparagine; by host glycan is attached at asparagine 134. Residues asparagine 235 and asparagine 347 are each glycosylated (N-linked (GlcNAc...) asparagine; by host). N-linked (GlcNAc...) asparagine; by host glycosylation is present at asparagine 399. Disulfide bonds link cysteine 405–cysteine 424 and cysteine 452–cysteine 475. Residues 488–508 (LVTFCFGWVLIPAVTFIILAI) traverse the membrane as a helical segment. Topologically, residues 509-627 (LKFIANIFHT…LNLFRYKSRC (119 aa)) are cytoplasmic. A binding to the ribonucleoprotein region spans residues 516-533 (FHTSNQENRLKSVLRKIK). 2 consecutive CCHC-type zinc fingers follow at residues 545 to 565 (CDVC…GVSC) and 570 to 591 (CPYC…YKVC). Binding to the ribonucleoprotein stretches follow at residues 588–605 (YKVC…KKTV), 592–603 (QVTHRFRDDLKK), and 611–625 (TPGC…RYKS). The ITAM domain maps to 611 to 634 (TPGCYRTLNLFRYKSRCYIFTMWI). The YxxL motif lies at 615 to 618 (YRTL). Residues 628–648 (YIFTMWIFLLVLESILWAASA) traverse the membrane as a helical segment. Topologically, residues 649–1104 (SETPLTPVWN…EWISGIFSGN (456 aa)) are lumenal. 7 disulfide bridges follow: cysteine 734–cysteine 769, cysteine 738–cysteine 776, cysteine 750–cysteine 884, cysteine 764–cysteine 895, cysteine 779–cysteine 903, cysteine 805–cysteine 814, and cysteine 822–cysteine 831. Residues 756-776 (YQYETSWGCNPSDCPGCGTGC) are fusion loop. N-linked (GlcNAc...) asparagine; by host glycosylation occurs at asparagine 927. 5 disulfide bridges follow: cysteine 969-cysteine 999, cysteine 992-cysteine 1044, cysteine 1009-cysteine 1014, cysteine 1045-cysteine 1050, and cysteine 1084-cysteine 1088. A helical membrane pass occupies residues 1105 to 1125 (WIVLIVLCVFLLFSLVLLSIL). A binding to the ribonucleoprotein region spans residues 1121 to 1134 (LLSILCPVRKHKKS). The Cytoplasmic portion of the chain corresponds to 1126-1134 (CPVRKHKKS).

This sequence belongs to the hantavirus envelope glycoprotein family. Homodimer. Homotetramer; forms heterotetrameric Gn-Gc spikes in the pre-fusion conformation. Interacts (via C-terminus) with the nucleoprotein. Interacts with host TUFM; this interaction contributes to the virus-induced degradation of mitochondria by autophagy, which leads to degradation of host MAVS and inhibition of type I interferon (IFN) responses. Interacts with host MAP1LC3B; this interaction contributes to the virus-induced degradation of mitochondria by autophagy, which leads to degradation of host MAVS and inhibition of type I interferon (IFN) responses. As to quaternary structure, homodimer. Homotetramer; forms heterotetrameric Gn-Gc spikes in the pre-fusion conformation. Homotrimer; forms homotrimer in the post-fusion conformation at acidic pH. Interacts (via C-terminus) with the nucleoprotein. Envelope polyprotein precursor is quickly cleaved in vivo just after synthesis, presumably by host signal peptidase.

The protein resides in the virion membrane. Its subcellular location is the host cell surface. It localises to the host Golgi apparatus membrane. It is found in the host endoplasmic reticulum membrane. The protein localises to the host mitochondrion. Forms homotetramers with glycoprotein C at the surface of the virion. Attaches the virion to host cell receptors including integrin ITGAV/ITGB3. This attachment induces virion internalization predominantly through clathrin-dependent endocytosis. May also bind to host C1QBP for virus entry into the host cell. Mediates the assembly and budding of infectious virus particles through its interaction with the nucleocapsid protein and the viral genome. May dysregulate normal immune and endothelial cell responses through an ITAM motif. Translocates to mitochondria, binds to host TUFM and recruits MAP1LC3B. These interactions induce mitochondrial autophagy and therefore destruction of host MAVS leading to inhibition of type I interferon (IFN) responses. Concomitant breakdown of glycoprotein N is apparently prevented by the nucleoprotein that may inhibit Gn-stimulated autophagosome-lysosome fusion. Interacts with the viral genomic RNA. Its function is as follows. Forms homotetramers with glycoprotein N at the surface of the virion. Attaches the virion to host cell receptors including integrin ITGAV/ITGB3. This attachment induces virion internalization predominantly through clathrin-dependent endocytosis. May also bind to host C1QBP for virus entry into the host cell. Class II fusion protein that promotes fusion of viral membrane with host endosomal membrane after endocytosis of the virion. The chain is Envelopment polyprotein (GP) from Apodemus agrarius (Eurasian field mouse).